Here is a 232-residue protein sequence, read N- to C-terminus: RNA chaperone ProQ (232 aa).

The segment at 105–182 is disordered; that stretch reads EAKARVQAQR…REEQHTPVSD (78 aa). Residues 117 to 136 are compositionally biased toward basic and acidic residues; that stretch reads QQAKKREAAAAAGEKEDAPR. A compositionally biased stretch (basic residues) spans 137–146; that stretch reads RERKPRPTTP. A compositionally biased stretch (basic and acidic residues) spans 147-177; that stretch reads RRKEGAERKPRAQKPVEKAPKTVKAPREEQH.

This sequence belongs to the ProQ family.

The protein localises to the cytoplasm. In terms of biological role, RNA chaperone with significant RNA binding, RNA strand exchange and RNA duplexing activities. May regulate ProP activity through an RNA-based, post-transcriptional mechanism. The chain is RNA chaperone ProQ from Escherichia coli (strain ATCC 8739 / DSM 1576 / NBRC 3972 / NCIMB 8545 / WDCM 00012 / Crooks).